The primary structure comprises 369 residues: F-box protein At3g08750 (369 aa).

One can recognise an F-box domain in the interval 6-53; the sequence is CLLLPSLPFELIEEILYKIPAESLIRFKSTCKKWYNLITEKRFMYNHL.

In Arabidopsis thaliana (Mouse-ear cress), this protein is F-box protein At3g08750.